Consider the following 354-residue polypeptide: S-adenosylmethionine:tRNA ribosyltransferase-isomerase (354 aa).

It belongs to the QueA family. As to quaternary structure, monomer.

It localises to the cytoplasm. It catalyses the reaction 7-aminomethyl-7-carbaguanosine(34) in tRNA + S-adenosyl-L-methionine = epoxyqueuosine(34) in tRNA + adenine + L-methionine + 2 H(+). It functions in the pathway tRNA modification; tRNA-queuosine biosynthesis. Its function is as follows. Transfers and isomerizes the ribose moiety from AdoMet to the 7-aminomethyl group of 7-deazaguanine (preQ1-tRNA) to give epoxyqueuosine (oQ-tRNA). The polypeptide is S-adenosylmethionine:tRNA ribosyltransferase-isomerase (Pseudomonas syringae pv. syringae (strain B728a)).